Consider the following 120-residue polypeptide: uncharacterized protein (120 aa).

The protein resides in the virion. This is an uncharacterized protein from Acanthamoeba polyphaga mimivirus (APMV).